The following is a 256-amino-acid chain: Putative bidirectional sugar transporter SWEET7e (256 aa).

Residues 1–9 (MVSPDLIRN) are Extracellular-facing. The chain crosses the membrane as a helical span at residues 10–30 (VVGIVGNAISFGLFLSPVLTF). Residues 10–97 (VVGIVGNAIS…TIFFLFSNKK (88 aa)) enclose the MtN3/slv 1 domain. The Cytoplasmic portion of the chain corresponds to 31–45 (WRIIKEKDMKYFKAD). A helical transmembrane segment spans residues 46-66 (PYLATLLNCMLWVFYGLPIVH). The Extracellular segment spans residues 67–69 (PNS). Residues 70–90 (ILVVTINGIGLVIEAVYLTIF) traverse the membrane as a helical segment. Topologically, residues 91–100 (FLFSNKKNKK) are cytoplasmic. Residues 101–121 (MGVVLATEALFMAAVALGVLL) form a helical membrane-spanning segment. Over 122-130 (GAHTHQRRS) the chain is Extracellular. A helical membrane pass occupies residues 131-151 (LIVGILCVIFGTIMYSSPLTI). The region spanning 133–212 (VGILCVIFGT…LMQLILDKNQ (80 aa)) is the MtN3/slv 2 domain. Residues 152–164 (MSQVVKTKSVEYM) are Cytoplasmic-facing. Residues 165–185 (PLLLSVVSFLNGLCWTSYALI) form a helical membrane-spanning segment. Position 186 (R186) is a topological domain, extracellular. The helical transmembrane segment at 187–207 (FDIFITIPNGLGVLFTLMQLI) threads the bilayer. Topologically, residues 208–256 (LDKNQDKNLELPTVAPVAKETSIVTPVSKDDDINGSTASHVIINITKEP) are cytoplasmic.

This sequence belongs to the SWEET sugar transporter family. As to quaternary structure, forms homooligomers and/or heterooligomers.

It is found in the cell membrane. Its function is as follows. Mediates both low-affinity uptake and efflux of sugar across the plasma membrane. This Oryza sativa subsp. japonica (Rice) protein is Putative bidirectional sugar transporter SWEET7e (SWEET7E).